The following is a 417-amino-acid chain: Queuine tRNA-ribosyltransferase accessory subunit 2 (417 aa).

Residues cysteine 324, cysteine 326, cysteine 329, and histidine 355 each contribute to the Zn(2+) site.

Belongs to the queuine tRNA-ribosyltransferase family. QTRT2 subfamily. As to quaternary structure, heterodimer of a catalytic subunit and an accessory subunit. Zn(2+) serves as cofactor.

The protein resides in the cytoplasm. Functionally, non-catalytic subunit of the queuine tRNA-ribosyltransferase (TGT) that catalyzes the base-exchange of a guanine (G) residue with queuine (Q) at position 34 (anticodon wobble position) in tRNAs with GU(N) anticodons (tRNA-Asp, -Asn, -His and -Tyr), resulting in the hypermodified nucleoside queuosine (7-(((4,5-cis-dihydroxy-2-cyclopenten-1-yl)amino)methyl)-7-deazaguanosine). In Drosophila persimilis (Fruit fly), this protein is Queuine tRNA-ribosyltransferase accessory subunit 2.